A 134-amino-acid polypeptide reads, in one-letter code: Small ribosomal subunit protein uS9 (134 aa).

The tract at residues 114–134 (QKESKNFGGPGARAKYQKSYR) is disordered.

It belongs to the universal ribosomal protein uS9 family.

This Methanosarcina acetivorans (strain ATCC 35395 / DSM 2834 / JCM 12185 / C2A) protein is Small ribosomal subunit protein uS9.